The sequence spans 241 residues: Tumor necrosis factor receptor superfamily member 18 (241 aa).

An N-terminal signal peptide occupies residues 1 to 25 (MAQHGAMGAFRALCGLALLCALSLG). The Extracellular segment spans residues 26 to 162 (QRPTGGPGCG…CVPGSPPAEP (137 aa)). Cystine bridges form between C34–C49, C74–C86, C81–C94, C115–C134, and C128–C153. TNFR-Cys repeat units follow at residues 34–72 (CGPG…EWDC), 74–112 (CVQP…GFQC), and 115–153 (CASG…NAVC). Residue N146 is glycosylated (N-linked (GlcNAc...) asparagine). A helical membrane pass occupies residues 163-183 (LGWLTVVLLAVAACVLLLTSA). Residues 184-241 (QLGLHIWQLRSQCMWPRETQLLLEVPPSTEDARSCQFPEEERGERSAEEKGRLGDLWV) are Cytoplasmic-facing. Residues 214–241 (DARSCQFPEEERGERSAEEKGRLGDLWV) form a disordered region. Over residues 222–241 (EEERGERSAEEKGRLGDLWV) the composition is skewed to basic and acidic residues.

As to quaternary structure, binds to TRAF1, TRAF2, and TRAF3, but not TRAF5 and TRAF6. Binds through its C-terminus to SIVA1/SIVA. In terms of tissue distribution, expressed in lymph node, peripheral blood leukocytes and weakly in spleen.

The protein resides in the cell membrane. It localises to the secreted. Functionally, receptor for TNFSF18. Seems to be involved in interactions between activated T-lymphocytes and endothelial cells and in the regulation of T-cell receptor-mediated cell death. Mediated NF-kappa-B activation via the TRAF2/NIK pathway. This chain is Tumor necrosis factor receptor superfamily member 18 (TNFRSF18), found in Homo sapiens (Human).